We begin with the raw amino-acid sequence, 429 residues long: Ribosomal RNA small subunit methyltransferase B (429 aa).

S-adenosyl-L-methionine-binding positions include 254–260, Asp277, Asp303, and Asp322; that span reads CAAPGGK. The Nucleophile role is filled by Cys375.

Belongs to the class I-like SAM-binding methyltransferase superfamily. RsmB/NOP family.

It localises to the cytoplasm. It carries out the reaction cytidine(967) in 16S rRNA + S-adenosyl-L-methionine = 5-methylcytidine(967) in 16S rRNA + S-adenosyl-L-homocysteine + H(+). Functionally, specifically methylates the cytosine at position 967 (m5C967) of 16S rRNA. In Yersinia enterocolitica serotype O:8 / biotype 1B (strain NCTC 13174 / 8081), this protein is Ribosomal RNA small subunit methyltransferase B.